We begin with the raw amino-acid sequence, 392 residues long: Formate-dependent phosphoribosylglycinamide formyltransferase (392 aa).

N(1)-(5-phospho-beta-D-ribosyl)glycinamide-binding positions include 22-23 (EL) and Glu-82. ATP is bound by residues Arg-114, Lys-155, 160-165 (SSGHGQ), 195-198 (EGFI), and Glu-203. An ATP-grasp domain is found at 119 to 307 (RLAAEELGLK…QFALHARAIL (189 aa)). Residues Glu-266 and Glu-278 each contribute to the Mg(2+) site. Residues Asp-285, Lys-355, and 362 to 363 (RR) each bind N(1)-(5-phospho-beta-D-ribosyl)glycinamide.

Belongs to the PurK/PurT family. In terms of assembly, homodimer.

The protein resides in the cell inner membrane. The enzyme catalyses N(1)-(5-phospho-beta-D-ribosyl)glycinamide + formate + ATP = N(2)-formyl-N(1)-(5-phospho-beta-D-ribosyl)glycinamide + ADP + phosphate + H(+). Its pathway is purine metabolism; IMP biosynthesis via de novo pathway; N(2)-formyl-N(1)-(5-phospho-D-ribosyl)glycinamide from N(1)-(5-phospho-D-ribosyl)glycinamide (formate route): step 1/1. Functionally, involved in the de novo purine biosynthesis. Catalyzes the transfer of formate to 5-phospho-ribosyl-glycinamide (GAR), producing 5-phospho-ribosyl-N-formylglycinamide (FGAR). Formate is provided by PurU via hydrolysis of 10-formyl-tetrahydrofolate. This is Formate-dependent phosphoribosylglycinamide formyltransferase from Mannheimia haemolytica (Pasteurella haemolytica).